The primary structure comprises 208 residues: uncharacterized protein (208 aa).

4 4Fe-4S ferredoxin-type domains span residues 59–88 (GVLV…SVGT), 114–145 (GDLN…WQQK), 147–176 (GCIT…VNTE), and 174–203 (NTES…IIEW). [4Fe-4S] cluster is bound by residues cysteine 68, cysteine 71, cysteine 74, cysteine 78, cysteine 123, cysteine 126, cysteine 131, cysteine 135, cysteine 156, cysteine 159, cysteine 162, cysteine 166, cysteine 183, cysteine 186, cysteine 189, and cysteine 193.

This is an uncharacterized protein from Escherichia coli O157:H7.